Here is a 101-residue protein sequence, read N- to C-terminus: Small ribosomal subunit protein uS10 (101 aa).

The protein belongs to the universal ribosomal protein uS10 family. As to quaternary structure, part of the 30S ribosomal subunit.

Its function is as follows. Involved in the binding of tRNA to the ribosomes. The sequence is that of Small ribosomal subunit protein uS10 from Flavobacterium psychrophilum (strain ATCC 49511 / DSM 21280 / CIP 103535 / JIP02/86).